The chain runs to 571 residues: MPYRMDRRAYAETYGPTVGDRIRLADTELFIEVEQDFTSYGDEVKFGGGKVIRDGMGQSPIANADGAVDLVITNALILDWWGIVKADIGIKDGKIFKIGKAGNPYIQDNVDIIIGPGTEALAGEGMILTAGGIDAHIHFICPQQIEVAIASGITTMIGGGTGPATGTNATTCTPGPWNIYRMLQAADAFPVNLGFLGKGNASKPQGLVEQVAAGAMGLKLHEDWGTTPAAIDTCLSVAATYDVQVAIHTDTLNEAGFVEDTIAAFKNRVIHTYHTEGAGGGHAPDIIKVCGQANVLPSSTNPTRPYTLNTLDEHLDMLMVCHHLDPAIAEDVAFAESRIRRETIAAEDILHDLGAFSMISSDSQAMGRVGEVIIRTWQTSHKMKVQRGILNPQGNEQKADNFRAKRYVAKYTINPAIAHGIAQYVGSVEEGKLADLCLWHPAFFGVKPEIVIKGGMIAWSQMGDANASIPTPQPVYMRPMFGSFAGARHATSLTFVSQAALENEIPSQLGLQKAAVAVSGTRQLSKRDMKLNDALPHIEVDPETYQVRADGELLICEPATVLPMAQRYFLF.

Positions G131–F571 constitute a Urease domain. H136, H138, and K219 together coordinate Ni(2+). The residue at position 219 (K219) is an N6-carboxylysine. H221 contacts substrate. Ni(2+) contacts are provided by H248 and H274. H322 functions as the Proton donor in the catalytic mechanism. D362 provides a ligand contact to Ni(2+).

The protein belongs to the metallo-dependent hydrolases superfamily. Urease alpha subunit family. As to quaternary structure, heterotrimer of UreA (gamma), UreB (beta) and UreC (alpha) subunits. Three heterotrimers associate to form the active enzyme. The cofactor is Ni cation. Carboxylation allows a single lysine to coordinate two nickel ions.

The protein localises to the cytoplasm. The enzyme catalyses urea + 2 H2O + H(+) = hydrogencarbonate + 2 NH4(+). The protein operates within nitrogen metabolism; urea degradation; CO(2) and NH(3) from urea (urease route): step 1/1. The chain is Urease subunit alpha from Nostoc punctiforme (strain ATCC 29133 / PCC 73102).